The following is a 178-amino-acid chain: MGITHELDIFVTNEDLALKNVELFKGNSYGCFINLKVKEEKKFNIIFVLKPDWSEVDKVKPIRMIVNNNSVDVEKVSESLYQVVYSASFSINSDSYVKVFSDNPDKYKHMYPTVTINVPKKKFKVVDQGNTYMFIQSPIDDCDKEQFLKNEFEYYDEENDFDDYEEYVKNRNDSFDDY.

Belongs to the poxviridae C7 protein family.

In terms of biological role, plays a role for multiplication of the virus in different cell types. The protein is Probable host range protein 2 of Yaba-like disease virus (YLDV).